Here is a 445-residue protein sequence, read N- to C-terminus: N-succinylarginine dihydrolase (445 aa).

Residues 19–28 (AGLSFGNVAS), N110, and 137–138 (HR) contribute to the substrate site. E174 is an active-site residue. Residue R214 participates in substrate binding. H250 is a catalytic residue. Substrate-binding residues include D252 and N363. The active-site Nucleophile is C369.

This sequence belongs to the succinylarginine dihydrolase family. In terms of assembly, homodimer.

It catalyses the reaction N(2)-succinyl-L-arginine + 2 H2O + 2 H(+) = N(2)-succinyl-L-ornithine + 2 NH4(+) + CO2. Its pathway is amino-acid degradation; L-arginine degradation via AST pathway; L-glutamate and succinate from L-arginine: step 2/5. Functionally, catalyzes the hydrolysis of N(2)-succinylarginine into N(2)-succinylornithine, ammonia and CO(2). This chain is N-succinylarginine dihydrolase, found in Shewanella pealeana (strain ATCC 700345 / ANG-SQ1).